The primary structure comprises 215 residues: N-(5'-phosphoribosyl)anthranilate isomerase (215 aa).

The protein belongs to the TrpF family.

The catalysed reaction is N-(5-phospho-beta-D-ribosyl)anthranilate = 1-(2-carboxyphenylamino)-1-deoxy-D-ribulose 5-phosphate. Its pathway is amino-acid biosynthesis; L-tryptophan biosynthesis; L-tryptophan from chorismate: step 3/5. The polypeptide is N-(5'-phosphoribosyl)anthranilate isomerase (Pelodictyon phaeoclathratiforme (strain DSM 5477 / BU-1)).